A 213-amino-acid polypeptide reads, in one-letter code: LexA repressor 2 (213 aa).

Residues 27–47 constitute a DNA-binding region (H-T-H motif); sequence QTEIARAFGFKGVRAAQYHLE. Active-site for autocatalytic cleavage activity residues include Ser133 and Lys170.

This sequence belongs to the peptidase S24 family. As to quaternary structure, homodimer.

It catalyses the reaction Hydrolysis of Ala-|-Gly bond in repressor LexA.. Its function is as follows. Represses a number of genes involved in the response to DNA damage (SOS response), including recA and lexA. In the presence of single-stranded DNA, RecA interacts with LexA causing an autocatalytic cleavage which disrupts the DNA-binding part of LexA, leading to derepression of the SOS regulon and eventually DNA repair. This Xanthomonas campestris pv. campestris (strain ATCC 33913 / DSM 3586 / NCPPB 528 / LMG 568 / P 25) protein is LexA repressor 2.